Reading from the N-terminus, the 412-residue chain is Adipocyte plasma membrane-associated protein (412 aa).

A disordered region spans residues 1-32 (MTEADGLRQRRPLRPQVVTDDNRTPEAKGGSS). Over 1-39 (MTEADGLRQRRPLRPQVVTDDNRTPEAKGGSSFSGRVFR) the chain is Cytoplasmic. The residue at position 19 (Thr19) is a Phosphothreonine. The helical transmembrane segment at 40 to 60 (ATFLMLAAFLTIPLLGALVLL) threads the bilayer. Topologically, residues 61 to 412 (DSPIDPEPLS…RAPYLCRLRL (352 aa)) are extracellular. An N-linked (GlcNAc...) asparagine glycan is attached at Asn159.

The protein belongs to the strictosidine synthase family.

Its subcellular location is the membrane. Its function is as follows. Exhibits strong arylesterase activity with beta-naphthyl acetate and phenyl acetate. May play a role in adipocyte differentiation. The chain is Adipocyte plasma membrane-associated protein (APMAP) from Bos taurus (Bovine).